Here is a 250-residue protein sequence, read N- to C-terminus: Coproheme decarboxylase (250 aa).

Fe-coproporphyrin III-binding positions include Arg-131, 145–149 (YPMNK), His-172, and Gln-185. The active site involves Tyr-145.

This sequence belongs to the ChdC family. Type 1 subfamily. It depends on Fe-coproporphyrin III as a cofactor.

It carries out the reaction Fe-coproporphyrin III + 2 H2O2 + 2 H(+) = heme b + 2 CO2 + 4 H2O. It catalyses the reaction Fe-coproporphyrin III + H2O2 + H(+) = harderoheme III + CO2 + 2 H2O. The enzyme catalyses harderoheme III + H2O2 + H(+) = heme b + CO2 + 2 H2O. It functions in the pathway porphyrin-containing compound metabolism; protoheme biosynthesis. Involved in coproporphyrin-dependent heme b biosynthesis. Catalyzes the decarboxylation of Fe-coproporphyrin III (coproheme) to heme b (protoheme IX), the last step of the pathway. The reaction occurs in a stepwise manner with a three-propionate intermediate. In Staphylococcus aureus (strain USA300 / TCH1516), this protein is Coproheme decarboxylase.